A 406-amino-acid chain; its full sequence is Tryptophan synthase beta chain (406 aa).

Lys99 bears the N6-(pyridoxal phosphate)lysine mark.

It belongs to the TrpB family. Tetramer of two alpha and two beta chains. Requires pyridoxal 5'-phosphate as cofactor.

It carries out the reaction (1S,2R)-1-C-(indol-3-yl)glycerol 3-phosphate + L-serine = D-glyceraldehyde 3-phosphate + L-tryptophan + H2O. Its pathway is amino-acid biosynthesis; L-tryptophan biosynthesis; L-tryptophan from chorismate: step 5/5. The beta subunit is responsible for the synthesis of L-tryptophan from indole and L-serine. The chain is Tryptophan synthase beta chain from Methylobacterium nodulans (strain LMG 21967 / CNCM I-2342 / ORS 2060).